Reading from the N-terminus, the 145-residue chain is Leghemoglobin (145 aa).

Residues 3–145 enclose the Globin domain; the sequence is GFTEKQEALV…ELAAALKKAF (143 aa). A nitrated tyrosine mark is found at tyrosine 26 and tyrosine 31. O2 is bound at residue histidine 62. 3 residues coordinate heme b: lysine 65, histidine 93, and lysine 96. Tyrosine 134 bears the Nitrated tyrosine mark.

Belongs to the plant globin family. In terms of assembly, monomer. In terms of processing, nitrated in effective nodules and particularly in hypoxic conditions; this mechanism may play a protective role in the symbiosis by buffering toxic peroxynitrite NO(2)(-). Nitration level decrease during nodule senescence. In terms of tissue distribution, root nodules.

Its subcellular location is the cytoplasm. It localises to the cytosol. The protein localises to the nucleus. Its function is as follows. Leghemoglobin that reversibly binds oxygen O(2) through a pentacoordinated heme iron. In root nodules, facilitates the diffusion of oxygen to the bacteroids while preventing the bacterial nitrogenase from being inactivated by buffering dioxygen, nitric oxide and carbon monoxide, and promoting the formation of reactive oxygen species (ROS, e.g. H(2)O(2)). This role is essential for symbiotic nitrogen fixation (SNF). This is Leghemoglobin from Psophocarpus tetragonolobus (Winged bean).